The primary structure comprises 345 residues: Phosphoribosylformylglycinamidine cyclo-ligase (345 aa).

Belongs to the AIR synthase family.

Its subcellular location is the cytoplasm. It carries out the reaction 2-formamido-N(1)-(5-O-phospho-beta-D-ribosyl)acetamidine + ATP = 5-amino-1-(5-phospho-beta-D-ribosyl)imidazole + ADP + phosphate + H(+). The protein operates within purine metabolism; IMP biosynthesis via de novo pathway; 5-amino-1-(5-phospho-D-ribosyl)imidazole from N(2)-formyl-N(1)-(5-phospho-D-ribosyl)glycinamide: step 2/2. This Prochlorococcus marinus (strain MIT 9211) protein is Phosphoribosylformylglycinamidine cyclo-ligase.